We begin with the raw amino-acid sequence, 336 residues long: MMQDLRLILIVVGAIAIIALLLHGLWTSRKERSSLFRDRPVKRAKKARDETPLDELDEGVGEVRVKGARSQQNEPSFSSSSFDNASFDNHSAREELRSEATSPFEHLSPASSYDPLLDEATPVDSPRSQVRGDSNPQVVNPRETPIQPSIDTPRESFAYDAPPSAPQQPAAHSLHEKVQPAPAQPQQPAEPVEPVAAKEAVLVLHVVAHQGGVIGGELLLQSLLQAGFQFGEMNIFHRHVNPAGAGPVLFSLANMVKPGSFNVDAMSEFSTPGVSIFMMVPSYGDASQNFKLMLQSAQRIADDVGGVVQDDERRMMTPQKVESYKARIRDVLKANA.

The Periplasmic segment spans residues 1-6 (MMQDLR). The chain crosses the membrane as a helical span at residues 7-27 (LILIVVGAIAIIALLLHGLWT). Over 28–336 (SRKERSSLFR…RIRDVLKANA (309 aa)) the chain is Cytoplasmic. A compositionally biased stretch (basic and acidic residues) spans 40–51 (PVKRAKKARDET). The disordered stretch occupies residues 40–190 (PVKRAKKARD…APAQPQQPAE (151 aa)). Residues 76-89 (SFSSSSFDNASFDN) show a composition bias toward low complexity. Residues 126–138 (PRSQVRGDSNPQV) show a composition bias toward polar residues. The segment covering 179–190 (QPAPAQPQQPAE) has biased composition (low complexity).

The protein belongs to the ZipA family. Interacts with FtsZ via their C-terminal domains.

It is found in the cell inner membrane. Essential cell division protein that stabilizes the FtsZ protofilaments by cross-linking them and that serves as a cytoplasmic membrane anchor for the Z ring. Also required for the recruitment to the septal ring of downstream cell division proteins. In Pectobacterium carotovorum subsp. carotovorum (strain PC1), this protein is Cell division protein ZipA.